Reading from the N-terminus, the 534-residue chain is Paired box protein Pax-1 (534 aa).

The segment at residues threonine 98–lysine 224 is a DNA-binding region (paired). The segment at glutamate 101 to threonine 157 is PAI subdomain. The RED subdomain stretch occupies residues asparagine 176 to lysine 224. Disordered stretches follow at residues proline 424–proline 480 and glutamate 492–proline 511.

It is found in the nucleus. This protein is a transcriptional activator. It may play a role in the formation of segmented structures of the embryo. May play an important role in the normal development of the vertebral column. In Homo sapiens (Human), this protein is Paired box protein Pax-1 (PAX1).